We begin with the raw amino-acid sequence, 340 residues long: Ferrochelatase (340 aa).

The Fe cation site is built by H189 and E292.

Belongs to the ferrochelatase family.

It is found in the cytoplasm. It catalyses the reaction heme b + 2 H(+) = protoporphyrin IX + Fe(2+). Its pathway is porphyrin-containing compound metabolism; protoheme biosynthesis; protoheme from protoporphyrin-IX: step 1/1. Functionally, catalyzes the ferrous insertion into protoporphyrin IX. This is Ferrochelatase from Pseudomonas savastanoi pv. phaseolicola (strain 1448A / Race 6) (Pseudomonas syringae pv. phaseolicola (strain 1448A / Race 6)).